We begin with the raw amino-acid sequence, 479 residues long: ATP synthase subunit beta (479 aa).

160-167 (GGAGVGKT) serves as a coordination point for ATP.

Belongs to the ATPase alpha/beta chains family. In terms of assembly, F-type ATPases have 2 components, CF(1) - the catalytic core - and CF(0) - the membrane proton channel. CF(1) has five subunits: alpha(3), beta(3), gamma(1), delta(1), epsilon(1). CF(0) has three main subunits: a(1), b(2) and c(9-12). The alpha and beta chains form an alternating ring which encloses part of the gamma chain. CF(1) is attached to CF(0) by a central stalk formed by the gamma and epsilon chains, while a peripheral stalk is formed by the delta and b chains.

Its subcellular location is the cell inner membrane. The enzyme catalyses ATP + H2O + 4 H(+)(in) = ADP + phosphate + 5 H(+)(out). Functionally, produces ATP from ADP in the presence of a proton gradient across the membrane. The catalytic sites are hosted primarily by the beta subunits. The sequence is that of ATP synthase subunit beta from Anaplasma phagocytophilum (strain HZ).